A 401-amino-acid chain; its full sequence is Jumonji C domain-containing protein 5 (401 aa).

One can recognise a JmjC domain in the interval 255–401 (EYLAQHELFA…PSFSVSFWWE (147 aa)). Histidine 306, aspartate 308, and histidine 385 together coordinate Fe cation.

Fe(2+) is required as a cofactor. In terms of tissue distribution, expressed in neurons close to the dorsal lateral neurons involved in circadian rhythm.

It localises to the nucleus. The protein localises to the nucleoplasm. The protein resides in the cytoplasm. It carries out the reaction L-arginyl-[protein] + 2-oxoglutarate + O2 = (3R)-3-hydroxy-L-arginyl-[protein] + succinate + CO2. In terms of biological role, bifunctional enzyme that acts both as an endopeptidase and 2-oxoglutarate-dependent monooxygenase. May be involved in regulation of behavior and circadian rhythms. The protein is Jumonji C domain-containing protein 5 of Drosophila melanogaster (Fruit fly).